The chain runs to 258 residues: Type III pantothenate kinase (258 aa).

6 to 13 (DVGNTQIF) is an ATP binding site. 107-110 (GADR) serves as a coordination point for substrate. The active-site Proton acceptor is aspartate 109. Aspartate 130 provides a ligand contact to K(+). ATP is bound at residue threonine 133. Residue threonine 185 coordinates substrate.

The protein belongs to the type III pantothenate kinase family. In terms of assembly, homodimer. NH4(+) serves as cofactor. The cofactor is K(+).

The protein resides in the cytoplasm. The catalysed reaction is (R)-pantothenate + ATP = (R)-4'-phosphopantothenate + ADP + H(+). It participates in cofactor biosynthesis; coenzyme A biosynthesis; CoA from (R)-pantothenate: step 1/5. Its function is as follows. Catalyzes the phosphorylation of pantothenate (Pan), the first step in CoA biosynthesis. The protein is Type III pantothenate kinase of Elusimicrobium minutum (strain Pei191).